Consider the following 378-residue polypeptide: UPF0754 membrane protein BCE_0952 (378 aa).

Helical transmembrane passes span 1 to 21 and 357 to 377; these read MNIW…GGFT and YLGA…LLFL.

It belongs to the UPF0754 family.

The protein resides in the cell membrane. In Bacillus cereus (strain ATCC 10987 / NRS 248), this protein is UPF0754 membrane protein BCE_0952.